The following is a 256-amino-acid chain: tRNA pseudouridine synthase A (256 aa).

Asp-43 acts as the Nucleophile in catalysis. Residue Tyr-94 coordinates substrate.

It belongs to the tRNA pseudouridine synthase TruA family.

The enzyme catalyses uridine(38/39/40) in tRNA = pseudouridine(38/39/40) in tRNA. Its function is as follows. Formation of pseudouridine at positions 38, 39 and 40 in the anticodon stem and loop of transfer RNAs. The polypeptide is tRNA pseudouridine synthase A (Pyrobaculum aerophilum (strain ATCC 51768 / DSM 7523 / JCM 9630 / CIP 104966 / NBRC 100827 / IM2)).